Consider the following 262-residue polypeptide: Global transcriptional regulator CodY (262 aa).

Residues 1–159 are GAF domain; that stretch reads MAHLLEKTRK…SSTVVGIQLL (159 aa). The H-T-H motif DNA-binding region spans 207–226; it reads ASVIADRIGITRSVIVNALR.

This sequence belongs to the CodY family.

The protein localises to the cytoplasm. Its function is as follows. DNA-binding global transcriptional regulator which is involved in the adaptive response to starvation and acts by directly or indirectly controlling the expression of numerous genes in response to nutrient availability. During rapid exponential growth, CodY is highly active and represses genes whose products allow adaptation to nutrient depletion. This chain is Global transcriptional regulator CodY, found in Streptococcus gordonii (strain Challis / ATCC 35105 / BCRC 15272 / CH1 / DL1 / V288).